The primary structure comprises 240 residues: Uridylate kinase (240 aa).

Residues 15–18 (KISG), glycine 58, and arginine 62 each bind ATP. UMP is bound by residues aspartate 77 and 138–145 (TGNPLFTT). The ATP site is built by threonine 165, tyrosine 171, and aspartate 174.

Belongs to the UMP kinase family. Homohexamer.

It is found in the cytoplasm. It catalyses the reaction UMP + ATP = UDP + ADP. The protein operates within pyrimidine metabolism; CTP biosynthesis via de novo pathway; UDP from UMP (UMPK route): step 1/1. Inhibited by UTP. Functionally, catalyzes the reversible phosphorylation of UMP to UDP. In Buchnera aphidicola subsp. Schizaphis graminum (strain Sg), this protein is Uridylate kinase.